Here is a 58-residue protein sequence, read N- to C-terminus: Large ribosomal subunit protein uL30 (58 aa).

This sequence belongs to the universal ribosomal protein uL30 family. As to quaternary structure, part of the 50S ribosomal subunit.

This chain is Large ribosomal subunit protein uL30, found in Desulfovibrio desulfuricans (strain ATCC 27774 / DSM 6949 / MB).